A 203-amino-acid chain; its full sequence is Translation initiation factor IF-3 (203 aa).

Belongs to the IF-3 family. In terms of assembly, monomer.

It is found in the cytoplasm. In terms of biological role, IF-3 binds to the 30S ribosomal subunit and shifts the equilibrium between 70S ribosomes and their 50S and 30S subunits in favor of the free subunits, thus enhancing the availability of 30S subunits on which protein synthesis initiation begins. This is Translation initiation factor IF-3 from Corynebacterium efficiens (strain DSM 44549 / YS-314 / AJ 12310 / JCM 11189 / NBRC 100395).